A 285-amino-acid polypeptide reads, in one-letter code: Bifunctional protein FolD (285 aa).

Residues 166-168 (GAS) and isoleucine 232 each bind NADP(+).

This sequence belongs to the tetrahydrofolate dehydrogenase/cyclohydrolase family. In terms of assembly, homodimer.

The enzyme catalyses (6R)-5,10-methylene-5,6,7,8-tetrahydrofolate + NADP(+) = (6R)-5,10-methenyltetrahydrofolate + NADPH. The catalysed reaction is (6R)-5,10-methenyltetrahydrofolate + H2O = (6R)-10-formyltetrahydrofolate + H(+). It participates in one-carbon metabolism; tetrahydrofolate interconversion. Its function is as follows. Catalyzes the oxidation of 5,10-methylenetetrahydrofolate to 5,10-methenyltetrahydrofolate and then the hydrolysis of 5,10-methenyltetrahydrofolate to 10-formyltetrahydrofolate. The protein is Bifunctional protein FolD of Aliivibrio fischeri (strain MJ11) (Vibrio fischeri).